The chain runs to 301 residues: Phosphatidylglycerol--prolipoprotein diacylglyceryl transferase (301 aa).

3 helical membrane passes run 17 to 37, 59 to 79, and 97 to 117; these read LAVR…IVVG, MLFY…VLFY, and GGMS…LFAY. An a 1,2-diacyl-sn-glycero-3-phospho-(1'-sn-glycerol)-binding site is contributed by arginine 142. 2 consecutive transmembrane segments (helical) span residues 230-250 and 265-285; these read MGAI…TVEF and LSMG…LLVW.

Belongs to the Lgt family.

The protein localises to the cell inner membrane. The enzyme catalyses L-cysteinyl-[prolipoprotein] + a 1,2-diacyl-sn-glycero-3-phospho-(1'-sn-glycerol) = an S-1,2-diacyl-sn-glyceryl-L-cysteinyl-[prolipoprotein] + sn-glycerol 1-phosphate + H(+). The protein operates within protein modification; lipoprotein biosynthesis (diacylglyceryl transfer). In terms of biological role, catalyzes the transfer of the diacylglyceryl group from phosphatidylglycerol to the sulfhydryl group of the N-terminal cysteine of a prolipoprotein, the first step in the formation of mature lipoproteins. The sequence is that of Phosphatidylglycerol--prolipoprotein diacylglyceryl transferase from Paraburkholderia xenovorans (strain LB400).